Here is a 313-residue protein sequence, read N- to C-terminus: Ribosomal RNA small subunit methyltransferase H (313 aa).

S-adenosyl-L-methionine contacts are provided by residues 35–37 (GGH), aspartate 55, phenylalanine 79, aspartate 101, and glutamine 108.

Belongs to the methyltransferase superfamily. RsmH family.

Its subcellular location is the cytoplasm. The catalysed reaction is cytidine(1402) in 16S rRNA + S-adenosyl-L-methionine = N(4)-methylcytidine(1402) in 16S rRNA + S-adenosyl-L-homocysteine + H(+). Functionally, specifically methylates the N4 position of cytidine in position 1402 (C1402) of 16S rRNA. This chain is Ribosomal RNA small subunit methyltransferase H, found in Enterobacter sp. (strain 638).